The primary structure comprises 521 residues: Organic cation/carnitine transporter 6 (521 aa).

Topologically, residues 1–37 (MADPISEPLLSHLTDDSGVNEKTRLEALTFDKIVEQS) are cytoplasmic. The helical transmembrane segment at 38–58 (LSDFGFWQFFQISLVGLALLF) threads the bilayer. Topologically, residues 59-123 (DAQQIFITVY…GLECSSSLLR (65 aa)) are extracellular. Asn-79 is a glycosylation site (N-linked (GlcNAc...) asparagine). A helical transmembrane segment spans residues 124–144 (GMPSSAFYIGAIVGGFFLALI). The Cytoplasmic portion of the chain corresponds to 145-154 (PDDSLGRKKL). A helical transmembrane segment spans residues 155-177 (VLFSTFAMSITSISVIFSTNVWI). The Extracellular portion of the chain corresponds to 178–182 (YTFLK). The chain crosses the membrane as a helical span at residues 183 to 200 (FIIGFSRSQTWSYALVLI). ATP is bound at residue 200–207 (ISERVSTR). The Cytoplasmic segment spans residues 201–213 (SERVSTRWRPRAT). Residues 214 to 234 (MIPFTLFVLGFMSLSGIAFLA) traverse the membrane as a helical segment. The Extracellular portion of the chain corresponds to 235-241 (QDSSWRY). Residues 242–262 (LYLYTSVPAVFYCIFLYLFAL) traverse the membrane as a helical segment. At 263-326 (ESPRWLHMQG…FFFRKWAFRR (64 aa)) the chain is on the cytoplasmic side. Residues 327 to 347 (ILVVMIIMFGLGISYYGVPLA) traverse the membrane as a helical segment. Over 348-356 (ARDIDVNIY) the chain is Extracellular. The chain crosses the membrane as a helical span at residues 357–377 (LSETLNALVELPTFVITPILL). The Cytoplasmic segment spans residues 378–385 (ERFNRRSS). The helical transmembrane segment at 386 to 406 (VLVNTLLGGASGVLCFVLSIL) threads the bilayer. Over 407-412 (GKTEIA) the chain is Extracellular. Residues 413–433 (FAFELGTFFCARIGFNLMAVF) form a helical membrane-spanning segment. Over 434–447 (MVEMFPTCVRSSAT) the chain is Cytoplasmic. A helical transmembrane segment spans residues 448 to 468 (MMFRQALVVGGACCPLIASIG). Residues 469 to 473 (RYIPS) lie on the Extracellular side of the membrane. A helical membrane pass occupies residues 474–494 (VSFAIFGIAMSGLGMFVLILP). The Cytoplasmic segment spans residues 495 to 521 (ETKGLSLCDSMEEQEKRDQAVNTSHVC).

Belongs to the major facilitator (TC 2.A.1) superfamily. Organic cation transporter (TC 2.A.1.19) family. As to expression, expressed in roots and stems. In the stem of secondary inflorescences, localized to the phloem. Also present in flowers, specifically in the stamen, in the filaments and the connective, and restricted to major veins in leaves.

The protein localises to the vacuole membrane. Its function is as follows. High affinity carnitine transporter involved in the active cellular uptake of carnitine. Also transports organic cations. In Arabidopsis thaliana (Mouse-ear cress), this protein is Organic cation/carnitine transporter 6 (OCT6).